Reading from the N-terminus, the 857-residue chain is MTTPEGDALAMRVEPVGLETEMQRSYLDYAMSVIVSRALPDVRDGLKPVHRRVLYAMYDGGYRPERGFYKCARVVGDVMGNYHPHGDSSIYDALVRLAQPWSMRMPLVDSNGNFGSPGNDPAAAMRYTECKMAPLSMEMVRDIDEETVDFTDNYDGRSQEPTVLPARFPNLLINGSAGIAVGMATNIPPHNLREVAAGAQWYLENYEASHEELLDALIERIKGPDFPTGALVVGRKGIEEAYRTGRGSITMRAVVEVEEIQNRQCLVVTELPYQTNPDNLAQKIADLVKDGKVGGIADVRDETSSRTGQRLVIVLKRDAVAKVVLNNLYKHTDLQSNFGANMLALVDGVPRTLSLDAFIRHWVNHQIEVIVRRTRFRLRKAEERAHILRGLLKALDAIDEVIALIRRSDTVEIARGGLMDLLEIDEIQANAILEMQLRRLAALERQKIVREHDELQAKITEYNEILASPVRQRGIVSEELTALVEKYGDDRKTKLIPYEGDMSIEDLIAEEDIVVTVTRGGYIKRTKTDDYRAQKRGGKGVRGTKLKEDDIVNHFFVSTTHHWLLFFTNKGRVYRAKAYELPDAGRDARGQHVANLLAFQPDETIAQIRAIRDYEAVPYLVLATKAGLVKKTPLKDYDSPRSGGVIAINLREQADGSDDELIGAELVSAEDDLLLISKKAQSIRFTASDDTLRPMGRATSGVKGMSFREGDELLSMNVVRAGTFVFTATDGGYAKRTSVDEYRVQGRGGLGIKAAKIVEDRGSLVGALVVEEHDEILAITLSGGVIRTRVNGVRETGRDTMGVQLINLGKRDAVVGIARNAEAGREAEEVDGDVAVDETAEGAATTGTDEGEAPSAE.

The Topo IIA-type catalytic domain maps to 39–507 (LPDVRDGLKP…YEGDMSIEDL (469 aa)). The active-site O-(5'-phospho-DNA)-tyrosine intermediate is Tyr-127. A GyrA-box motif is present at residues 534 to 540 (QKRGGKG). Residues 825–857 (REAEEVDGDVAVDETAEGAATTGTDEGEAPSAE) are disordered. Positions 828–840 (EEVDGDVAVDETA) are enriched in acidic residues.

Belongs to the type II topoisomerase GyrA/ParC subunit family. In terms of assembly, heterotetramer, composed of two GyrA and two GyrB chains. In the heterotetramer, GyrA contains the active site tyrosine that forms a transient covalent intermediate with DNA, while GyrB binds cofactors and catalyzes ATP hydrolysis.

It localises to the cytoplasm. It carries out the reaction ATP-dependent breakage, passage and rejoining of double-stranded DNA.. In terms of biological role, a type II topoisomerase that negatively supercoils closed circular double-stranded (ds) DNA in an ATP-dependent manner to modulate DNA topology and maintain chromosomes in an underwound state. Negative supercoiling favors strand separation, and DNA replication, transcription, recombination and repair, all of which involve strand separation. Also able to catalyze the interconversion of other topological isomers of dsDNA rings, including catenanes and knotted rings. Type II topoisomerases break and join 2 DNA strands simultaneously in an ATP-dependent manner. This is DNA gyrase subunit A from Streptomyces coelicolor (strain ATCC BAA-471 / A3(2) / M145).